The chain runs to 407 residues: Peptidase T (407 aa).

Residue His82 participates in Zn(2+) binding. Asp84 is a catalytic residue. Zn(2+) is bound at residue Asp143. The active-site Proton acceptor is the Glu177. Zn(2+) contacts are provided by Glu178, Asp200, and His382.

The protein belongs to the peptidase M20B family. Requires Zn(2+) as cofactor.

It localises to the cytoplasm. It catalyses the reaction Release of the N-terminal residue from a tripeptide.. Its function is as follows. Cleaves the N-terminal amino acid of tripeptides. The protein is Peptidase T of Streptococcus equi subsp. equi (strain 4047).